Here is a 1762-residue protein sequence, read N- to C-terminus: ADAMTS-like protein 1 (1762 aa).

A signal peptide spans 1–28; it reads MECCRRATPGTLLLFLAFLLLSSRTARS. The TSP type-1 1 domain maps to 33-82; the sequence is DGLWDAWGPWSECSRTCGGGASYSLRRCLSSKSCEGRNIRYRTCSNVDCP. Trp39 and Trp42 each carry a C-linked (Man) tryptophan glycan. Cystine bridges form between Cys45-Cys76, Cys49-Cys81, and Cys60-Cys66. Residue Thr48 is glycosylated (O-linked (Fuc...) threonine). Asn251 is a glycosylation site (N-linked (GlcNAc...) asparagine). Thr312 carries O-linked (Fuc...) threonine glycosylation. 6 TSP type-1 domains span residues 376-424, 436-493, 522-584, 607-665, 666-729, and 788-850; these read PLPR…MYTP, DCPK…TPCY, EEPS…GPCS, ELYD…NLDP, CPAR…FNCP, and CPSE…ATCA. Ser391 carries an O-linked (Fuc...) serine glycan. O-linked (Fuc...) threonine glycosylation is present at Thr451. 3 disulfide bridges follow: Cys534-Cys578, Cys538-Cys583, and Cys549-Cys567. 7 disulfides stabilise this stretch: Cys678–Cys723, Cys682–Cys728, Cys693–Cys712, Cys800–Cys844, Cys804–Cys849, Cys815–Cys832, and Cys899–Cys947. In terms of domain architecture, Ig-like C2-type 1 spans 861–963; the sequence is PHIAAARKVY…EHFVIKLIGG (103 aa). Residues 1120–1164 form a disordered region; it reads LKPSERRTSPVTLSPHKHVSGFSSSLRTSSTGDAGGGSRRPHRKP. Residues 1139 to 1151 show a composition bias toward low complexity; the sequence is SGFSSSLRTSSTG. Ig-like C2-type domains follow at residues 1164–1266, 1286–1369, and 1395–1485; these read PTIL…IAVT, PAVT…TQLL, and PSVL…ASLV. 3 disulfide bridges follow: Cys1202/Cys1250, Cys1308/Cys1353, and Cys1418/Cys1469. 2 consecutive TSP type-1 domains span residues 1545 to 1608 and 1666 to 1726; these read CPSR…QLCV and CSVH…TPCE. In terms of domain architecture, PLAC spans 1726-1762; sequence ENMECRDTTRYCEKVKQLKLCQLSQFKSRCCGTCGKA.

As to quaternary structure, monomer. C-, N- and O-glycosylated. O-fucosylated by POFUT2 on a serine or a threonine residue found within the consensus sequence C1-X(2)-(S/T)-C2-G of the TSP type-1 repeat domains where C1 and C2 are the first and second cysteine residue of the repeat, respectively. Fucosylated repeats can then be further glycosylated by the addition of a beta-1,3-glucose residue by the glucosyltransferase, B3GALTL. Fucosylation mediates the efficient secretion of ADAMTSL1. Can also be C-glycosylated with one or two mannose molecules on tryptophan residues within the consensus sequence W-X-X-W of the TPRs, and N-glycosylated. These other glycosylations can also facilitate secretion. In terms of processing, disulfide bonds are present. In terms of tissue distribution, expressed primarily in adult skeletal muscle.

It localises to the secreted. The protein resides in the extracellular space. Its subcellular location is the extracellular matrix. The protein is ADAMTS-like protein 1 (ADAMTSL1) of Homo sapiens (Human).